A 258-amino-acid chain; its full sequence is Indole-3-glycerol phosphate synthase (258 aa).

Belongs to the TrpC family.

The enzyme catalyses 1-(2-carboxyphenylamino)-1-deoxy-D-ribulose 5-phosphate + H(+) = (1S,2R)-1-C-(indol-3-yl)glycerol 3-phosphate + CO2 + H2O. The protein operates within amino-acid biosynthesis; L-tryptophan biosynthesis; L-tryptophan from chorismate: step 4/5. This chain is Indole-3-glycerol phosphate synthase, found in Geobacillus sp. (strain WCH70).